We begin with the raw amino-acid sequence, 2200 residues long: Bromodomain and WD repeat-containing DDB_G0285837 (2200 aa).

Disordered stretches follow at residues 137-178 (GFND…SNTN), 194-245 (VTPT…TTPP), and 259-288 (DIQQ…NNNN). Composition is skewed to low complexity over residues 161–176 (NNNN…SNSN), 203–242 (NTTN…TTLT), and 259–273 (DIQQ…QQQQ). WD repeat units follow at residues 352–391 (GHKA…LIAT), 394–433 (GHLG…YDSI), 442–483 (SVNN…HVIS), 548–586 (GKTN…PKLV), 591–630 (GHPT…KWDH), 653–691 (RSKA…FHLE), 694–736 (EHTS…KKFV), and 741–780 (GFQC…DINN). Composition is skewed to acidic residues over residues 918 to 933 (DDEI…EDFN) and 955 to 968 (QDDD…EDYD). Disordered regions lie at residues 918 to 1180 (DDEI…NHLT), 1262 to 1297 (NNNN…DDDD), 1461 to 1538 (ENNQ…NNNN), and 1662 to 1703 (NFNS…NNNN). Positions 974–1000 (MSTRKKSKIKADKRKKRLLKQSKKFTR) are enriched in basic residues. The span at 1052–1074 (GEIEMDDDDQYLNDNILDSDDND) shows a compositional bias: acidic residues. Positions 1109-1132 (SSDNSSENDSSANGSDSDYSGSKS) are enriched in low complexity. Residues 1133-1164 (NKNKRGDKSKRNKKGKKNVKNKKVQKRGRKKS) are compositionally biased toward basic residues. Low complexity-rich tracts occupy residues 1262-1292 (NNNN…QQIN) and 1461-1525 (ENNQ…NSLN). The Bromo domain maps to 1722-1823 (EKIENLKKEM…HRISDILKEA (102 aa)). The segment at 1850 to 2200 (DKDDSQLDDE…RGRGRPPKSN (351 aa)) is disordered. The segment covering 1878–1888 (LANNNHGNNKS) has biased composition (low complexity). Residues 1910–1920 (TGKNITRSLLS) show a composition bias toward polar residues. Low complexity predominate over residues 1945 to 1958 (TTTTTTTTTTTSST). Composition is skewed to acidic residues over residues 2016-2028 (DYND…DNDG), 2057-2073 (EDED…EEDY), and 2104-2113 (SEEEEDEDQS). Residues 2114–2124 (DVNSNNNSDNE) are compositionally biased toward low complexity. Residues 2125–2138 (SGGEDGYSGEDGSE) show a composition bias toward acidic residues. Low complexity predominate over residues 2170-2185 (SFKNNNNNNNINNNVN). Residues 2190 to 2200 (KRGRGRPPKSN) show a composition bias toward basic residues.

In Dictyostelium discoideum (Social amoeba), this protein is Bromodomain and WD repeat-containing DDB_G0285837.